A 192-amino-acid chain; its full sequence is Ion-translocating oxidoreductase complex subunit B (192 aa).

The tract at residues 1-26 is hydrophobic; that stretch reads MNAIWIAVVAVSLLGLAFGAILGYAS. Residues 32–91 form the 4Fe-4S domain; that stretch reads EDDPVVEKIDEILPQSQCGQCGYPGCRPYAEAIGSQGEKINRCAPGGEAVMLKIATLLNV. Cys-49, Cys-52, Cys-57, Cys-74, Cys-117, Cys-120, Cys-123, Cys-127, Cys-147, Cys-150, Cys-153, and Cys-157 together coordinate [4Fe-4S] cluster. 4Fe-4S ferredoxin-type domains lie at 108–137 and 138–167; these read MLAV…GATR and AMHT…LRPV.

This sequence belongs to the 4Fe4S bacterial-type ferredoxin family. RnfB subfamily. In terms of assembly, the complex is composed of six subunits: RnfA, RnfB, RnfC, RnfD, RnfE and RnfG. It depends on [4Fe-4S] cluster as a cofactor.

The protein resides in the cell inner membrane. Functionally, part of a membrane-bound complex that couples electron transfer with translocation of ions across the membrane. In Citrobacter koseri (strain ATCC BAA-895 / CDC 4225-83 / SGSC4696), this protein is Ion-translocating oxidoreductase complex subunit B.